The following is a 163-amino-acid chain: Large ribosomal subunit protein bL21 (163 aa).

A disordered region spans residues 124-163 (KETTKKTKATVSIKKTAKKPSEKKSAPQKKAAVVSNNKED).

This sequence belongs to the bacterial ribosomal protein bL21 family. As to quaternary structure, part of the 50S ribosomal subunit. Contacts protein L20.

In terms of biological role, this protein binds to 23S rRNA in the presence of protein L20. The polypeptide is Large ribosomal subunit protein bL21 (Bartonella quintana (strain Toulouse) (Rochalimaea quintana)).